Reading from the N-terminus, the 599-residue chain is 1-deoxy-D-xylulose-5-phosphate synthase (599 aa).

Thiamine diphosphate is bound by residues H63 and 104–106 (GHS). D135 serves as a coordination point for Mg(2+). Residues 136-137 (GA), N164, Y271, and E352 each bind thiamine diphosphate. N164 lines the Mg(2+) pocket.

The protein belongs to the transketolase family. DXPS subfamily. As to quaternary structure, homodimer. Mg(2+) serves as cofactor. Requires thiamine diphosphate as cofactor.

It catalyses the reaction D-glyceraldehyde 3-phosphate + pyruvate + H(+) = 1-deoxy-D-xylulose 5-phosphate + CO2. It functions in the pathway metabolic intermediate biosynthesis; 1-deoxy-D-xylulose 5-phosphate biosynthesis; 1-deoxy-D-xylulose 5-phosphate from D-glyceraldehyde 3-phosphate and pyruvate: step 1/1. In terms of biological role, catalyzes the acyloin condensation reaction between C atoms 2 and 3 of pyruvate and glyceraldehyde 3-phosphate to yield 1-deoxy-D-xylulose-5-phosphate (DXP). In Nitratiruptor sp. (strain SB155-2), this protein is 1-deoxy-D-xylulose-5-phosphate synthase.